The primary structure comprises 835 residues: Phenylalanine--tRNA ligase beta subunit (835 aa).

One can recognise a tRNA-binding domain in the interval 44–160; sequence PATTGPLVLG…ESGQPGDDAR (117 aa). A B5 domain is found at 419–494; that stretch reads PTMPSITMPV…RLEGLEAIPT (76 aa). The Mg(2+) site is built by D472, D478, E481, and E482. An FDX-ACB domain is found at 741 to 834; that stretch reads SAFPALHQDI…AKERLGAEMR (94 aa).

This sequence belongs to the phenylalanyl-tRNA synthetase beta subunit family. Type 1 subfamily. In terms of assembly, tetramer of two alpha and two beta subunits. It depends on Mg(2+) as a cofactor.

It localises to the cytoplasm. It carries out the reaction tRNA(Phe) + L-phenylalanine + ATP = L-phenylalanyl-tRNA(Phe) + AMP + diphosphate + H(+). The polypeptide is Phenylalanine--tRNA ligase beta subunit (Corynebacterium efficiens (strain DSM 44549 / YS-314 / AJ 12310 / JCM 11189 / NBRC 100395)).